The following is a 54-amino-acid chain: MKVIIIEGLQTDKCMNDCYHYLIKLYRQEIQGDSNISWNKRSRDRASTARSRPV.

This is an uncharacterized protein from Bacillus subtilis (strain 168).